A 465-amino-acid chain; its full sequence is tRNA-2-methylthio-N(6)-dimethylallyladenosine synthase (465 aa).

The MTTase N-terminal domain maps to 5–125; it reads RKLHIKSYGC…LPELLKRAGN (121 aa). [4Fe-4S] cluster is bound by residues Cys-14, Cys-50, Cys-88, Cys-166, Cys-170, and Cys-173. Positions 152-384 constitute a Radical SAM core domain; it reads RARGISAFVT…QELIDSQQSA (233 aa). Residues 387–449 form the TRAM domain; sequence KAAIGSTVDV…RYSFLGELVT (63 aa).

Belongs to the methylthiotransferase family. MiaB subfamily. As to quaternary structure, monomer. [4Fe-4S] cluster is required as a cofactor.

The protein resides in the cytoplasm. The enzyme catalyses N(6)-dimethylallyladenosine(37) in tRNA + (sulfur carrier)-SH + AH2 + 2 S-adenosyl-L-methionine = 2-methylsulfanyl-N(6)-dimethylallyladenosine(37) in tRNA + (sulfur carrier)-H + 5'-deoxyadenosine + L-methionine + A + S-adenosyl-L-homocysteine + 2 H(+). Functionally, catalyzes the methylthiolation of N6-(dimethylallyl)adenosine (i(6)A), leading to the formation of 2-methylthio-N6-(dimethylallyl)adenosine (ms(2)i(6)A) at position 37 in tRNAs that read codons beginning with uridine. This Bradyrhizobium diazoefficiens (strain JCM 10833 / BCRC 13528 / IAM 13628 / NBRC 14792 / USDA 110) protein is tRNA-2-methylthio-N(6)-dimethylallyladenosine synthase.